The following is a 311-amino-acid chain: Acetyl-coenzyme A carboxylase carboxyl transferase subunit beta (311 aa).

A CoA carboxyltransferase N-terminal domain is found at 27 to 296 (LWTKCGHCSA…AEAADAPEAG (270 aa)). Residues Cys31, Cys34, Cys50, and Cys53 each contribute to the Zn(2+) site. Residues 31 to 53 (CGHCSAVLYRPELERNQEVCPKC) form a C4-type zinc finger. The span at 286-299 (AAEAADAPEAGEQP) shows a compositional bias: low complexity. The interval 286-311 (AAEAADAPEAGEQPSEATDPVGEHWD) is disordered.

It belongs to the AccD/PCCB family. In terms of assembly, acetyl-CoA carboxylase is a heterohexamer composed of biotin carboxyl carrier protein (AccB), biotin carboxylase (AccC) and two subunits each of ACCase subunit alpha (AccA) and ACCase subunit beta (AccD). Zn(2+) is required as a cofactor.

It is found in the cytoplasm. The catalysed reaction is N(6)-carboxybiotinyl-L-lysyl-[protein] + acetyl-CoA = N(6)-biotinyl-L-lysyl-[protein] + malonyl-CoA. It functions in the pathway lipid metabolism; malonyl-CoA biosynthesis; malonyl-CoA from acetyl-CoA: step 1/1. Functionally, component of the acetyl coenzyme A carboxylase (ACC) complex. Biotin carboxylase (BC) catalyzes the carboxylation of biotin on its carrier protein (BCCP) and then the CO(2) group is transferred by the transcarboxylase to acetyl-CoA to form malonyl-CoA. The chain is Acetyl-coenzyme A carboxylase carboxyl transferase subunit beta from Alkalilimnicola ehrlichii (strain ATCC BAA-1101 / DSM 17681 / MLHE-1).